Reading from the N-terminus, the 130-residue chain is Small ribosomal subunit protein uS9 (130 aa).

Positions 109–130 (RVKERKKYGQKGARAKFQFSKR) are disordered.

Belongs to the universal ribosomal protein uS9 family.

This chain is Small ribosomal subunit protein uS9, found in Desulfotalea psychrophila (strain LSv54 / DSM 12343).